The chain runs to 466 residues: Soluble pyridine nucleotide transhydrogenase (466 aa).

Residue 36–45 coordinates FAD; that stretch reads ERYHQVGGGC.

Belongs to the class-I pyridine nucleotide-disulfide oxidoreductase family. Requires FAD as cofactor.

The protein localises to the cytoplasm. The catalysed reaction is NAD(+) + NADPH = NADH + NADP(+). Functionally, conversion of NADPH, generated by peripheral catabolic pathways, to NADH, which can enter the respiratory chain for energy generation. In Colwellia psychrerythraea (strain 34H / ATCC BAA-681) (Vibrio psychroerythus), this protein is Soluble pyridine nucleotide transhydrogenase.